We begin with the raw amino-acid sequence, 65 residues long: Large ribosomal subunit protein uL29 (65 aa).

Belongs to the universal ribosomal protein uL29 family.

The sequence is that of Large ribosomal subunit protein uL29 from Buchnera aphidicola subsp. Baizongia pistaciae (strain Bp).